The primary structure comprises 557 residues: Copine-4 (557 aa).

C2 domains lie at 3–131 (KMSN…SKSL) and 137–264 (TAGK…VQWE). 5 residues coordinate Ca(2+): Asp170, Asp176, Asp232, Asp234, and Asp240. The region spanning 305–507 (QIQFTVAIDF…VLRDIVQFVP (203 aa)) is the VWFA domain.

The protein belongs to the copine family. Interacts (via VWFA domain) with ACTB, BCOR, BICD2, CCDC22, CDC42BPB, CEP162, MYCBP2, NONO, PDCD6, PITPNM2, RDX, SKIL, SKT, SPTBN1, UBE2O and WTAP. The cofactor is Ca(2+).

In terms of biological role, probable calcium-dependent phospholipid-binding protein that may play a role in calcium-mediated intracellular processes. In Mus musculus (Mouse), this protein is Copine-4.